We begin with the raw amino-acid sequence, 316 residues long: tRNA dimethylallyltransferase (316 aa).

17–24 (GPTASGKT) serves as a coordination point for ATP. 19–24 (TASGKT) provides a ligand contact to substrate. 3 interaction with substrate tRNA regions span residues 42 to 45 (DSAL), 166 to 170 (QRLSR), and 247 to 252 (RCVGYR).

It belongs to the IPP transferase family. In terms of assembly, monomer. Mg(2+) is required as a cofactor.

It catalyses the reaction adenosine(37) in tRNA + dimethylallyl diphosphate = N(6)-dimethylallyladenosine(37) in tRNA + diphosphate. Functionally, catalyzes the transfer of a dimethylallyl group onto the adenine at position 37 in tRNAs that read codons beginning with uridine, leading to the formation of N6-(dimethylallyl)adenosine (i(6)A). This chain is tRNA dimethylallyltransferase, found in Salmonella typhi.